Reading from the N-terminus, the 413-residue chain is Eukaryotic initiation factor 4A-10 (413 aa).

The short motif at aspartate 40 to glutamine 68 is the Q motif element. The Helicase ATP-binding domain maps to isoleucine 71 to isoleucine 241. Alanine 84–threonine 91 is an ATP binding site. Positions aspartate 189–aspartate 192 match the DEAD box motif. The Helicase C-terminal domain occupies glycine 252–leucine 413.

This sequence belongs to the DEAD box helicase family. eIF4A subfamily. In terms of assembly, eIF4F is a multi-subunit complex, the composition of which varies with external and internal environmental conditions. It is composed of at least EIF4A, EIF4E and EIF4G.

It catalyses the reaction ATP + H2O = ADP + phosphate + H(+). Its function is as follows. ATP-dependent RNA helicase which is a subunit of the eIF4F complex involved in cap recognition and is required for mRNA binding to ribosome. In the current model of translation initiation, eIF4A unwinds RNA secondary structures in the 5'-UTR of mRNAs which is necessary to allow efficient binding of the small ribosomal subunit, and subsequent scanning for the initiator codon. This is Eukaryotic initiation factor 4A-10 from Nicotiana tabacum (Common tobacco).